The sequence spans 462 residues: MECPEGQLPISSENDSTPTVSTSEVTSQQEPQILVDRGSETTYESSADIAGDEGTQIPADEDTQTDADSSAQAAAQAPENFQEGKDMSESQDEVPDEVENQFILRLPLEHACTVRNLARSQSVKMKDKLKIDLLPDGRHAVVEVEDVPLAAKLVDLPCVIESLRTLDKKTFYKTADISQMLVCTADGDIHLSPEEPAASTDPNIVRKKERGREEKCVWKHGITPPLKNVRKKRFRKTQKKVPDVKEMEKSSFTEYIESPDVENEVKRLLRSDAEAVSTRWEVIAEDGTKEIESQGSIPGFLISSGMSSHKQGHTSSEYDMLREMFSDSRSNNDDDEDEDDEDEDEDEDEDEDEDKEEEEEDCSEEYLERQLQAEFIESGQYRANEGTSSIVMEIQKQIEKKEKKLHKIQNKAQRQKDLIMKVENLTLKNHFQSVLEQLELQEKQKNEKLISLQEQLQRFLKK.

2 disordered regions span residues 1–97 (MECP…VPDE) and 327–366 (DSRS…SEEY). 2 stretches are compositionally biased toward low complexity: residues 16-30 (STPT…SQQE) and 66-77 (DADSSAQAAAQA). Residues 333 to 365 (DDDEDEDDEDEDEDEDEDEDEDKEEEEEDCSEE) show a composition bias toward acidic residues. The stretch at 342 to 462 (DEDEDEDEDE…QEQLQRFLKK (121 aa)) forms a coiled coil.

Belongs to the TAF7 family. In terms of assembly, TFIID is composed of TATA binding protein (TBP) and a number of TBP-associated factors (TAFs). TAF7L may replace TAF7 in a spermatogenesis-specific form of TFIID. Interacts with TBP; the interaction occurs in a sub-population of cells (pachytene and haploid round spermatids) and is developmentally regulated through differential intracellular localization of the two proteins. Interacts with TAF1. As to expression, testis-specific.

The protein localises to the nucleus. Its subcellular location is the cytoplasm. Its function is as follows. Probably functions as a spermatogenesis-specific component of the DNA-binding general transcription factor complex TFIID, a multimeric protein complex that plays a central role in mediating promoter responses to various activators and repressors. May play a role in spermatogenesis. This is Transcription initiation factor TFIID subunit 7-like (TAF7L) from Homo sapiens (Human).